A 407-amino-acid polypeptide reads, in one-letter code: Tyrosine--tRNA ligase (407 aa).

Y35 lines the L-tyrosine pocket. The short motif at 40 to 49 (PTADSLHVGH) is the 'HIGH' region element. Positions 168 and 172 each coordinate L-tyrosine. The 'KMSKS' region signature appears at 228 to 232 (KMGKT). K231 provides a ligand contact to ATP. An S4 RNA-binding domain is found at 341–405 (NPLVDLLAKC…RGKKNFNRIV (65 aa)).

This sequence belongs to the class-I aminoacyl-tRNA synthetase family. TyrS type 1 subfamily. Homodimer.

It localises to the cytoplasm. The catalysed reaction is tRNA(Tyr) + L-tyrosine + ATP = L-tyrosyl-tRNA(Tyr) + AMP + diphosphate + H(+). Catalyzes the attachment of tyrosine to tRNA(Tyr) in a two-step reaction: tyrosine is first activated by ATP to form Tyr-AMP and then transferred to the acceptor end of tRNA(Tyr). This Clostridium botulinum (strain 657 / Type Ba4) protein is Tyrosine--tRNA ligase.